We begin with the raw amino-acid sequence, 1221 residues long: DNA-directed RNA polymerase subunit beta (1221 aa).

Residues 1176–1221 (EKKKLAEEEAEIAAEAEAEGSAEGDAAEADADANEAETADDDKASK) are disordered. Over residues 1183–1215 (EEAEIAAEAEAEGSAEGDAAEADADANEAETAD) the composition is skewed to acidic residues.

Belongs to the RNA polymerase beta chain family. In terms of assembly, the RNAP catalytic core consists of 2 alpha, 1 beta, 1 beta' and 1 omega subunit. When a sigma factor is associated with the core the holoenzyme is formed, which can initiate transcription.

It carries out the reaction RNA(n) + a ribonucleoside 5'-triphosphate = RNA(n+1) + diphosphate. Its function is as follows. DNA-dependent RNA polymerase catalyzes the transcription of DNA into RNA using the four ribonucleoside triphosphates as substrates. This is DNA-directed RNA polymerase subunit beta from Lactobacillus delbrueckii subsp. bulgaricus (strain ATCC 11842 / DSM 20081 / BCRC 10696 / JCM 1002 / NBRC 13953 / NCIMB 11778 / NCTC 12712 / WDCM 00102 / Lb 14).